The chain runs to 939 residues: UvrABC system protein A (939 aa).

32-39 (GLSGSGKS) contacts ATP. A C4-type zinc finger spans residues 252–279 (CPDCGISIGEISPSMFSFNAPFGKCDVC). ABC transporter domains are found at residues 309-588 (WGEG…KESI) and 608-936 (AGKN…QYLK). 640-647 (GVSGSGKS) contacts ATP. A C4-type zinc finger spans residues 739–765 (CEACKGDGIVRIEMQFLSDVYVPCDVC).

The protein belongs to the ABC transporter superfamily. UvrA family. In terms of assembly, forms a heterotetramer with UvrB during the search for lesions.

The protein localises to the cytoplasm. Functionally, the UvrABC repair system catalyzes the recognition and processing of DNA lesions. UvrA is an ATPase and a DNA-binding protein. A damage recognition complex composed of 2 UvrA and 2 UvrB subunits scans DNA for abnormalities. When the presence of a lesion has been verified by UvrB, the UvrA molecules dissociate. The chain is UvrABC system protein A from Clostridium acetobutylicum (strain ATCC 824 / DSM 792 / JCM 1419 / IAM 19013 / LMG 5710 / NBRC 13948 / NRRL B-527 / VKM B-1787 / 2291 / W).